Reading from the N-terminus, the 129-residue chain is Glycine cleavage system H protein (129 aa).

Residues 24 to 106 (SYTVGITEHA…FGDGWFFRVM (83 aa)) form the Lipoyl-binding domain. K65 is subject to N6-lipoyllysine.

The protein belongs to the GcvH family. As to quaternary structure, the glycine cleavage system is composed of four proteins: P, T, L and H. (R)-lipoate is required as a cofactor.

Functionally, the glycine cleavage system catalyzes the degradation of glycine. The H protein shuttles the methylamine group of glycine from the P protein to the T protein. In Shewanella frigidimarina (strain NCIMB 400), this protein is Glycine cleavage system H protein.